We begin with the raw amino-acid sequence, 796 residues long: Probable phosphoketolase (796 aa).

The protein belongs to the XFP family. Thiamine diphosphate serves as cofactor.

The polypeptide is Probable phosphoketolase (Streptomyces coelicolor (strain ATCC BAA-471 / A3(2) / M145)).